The primary structure comprises 510 residues: Cytochrome P450 4A6 (510 aa).

Residues 1–4 (MSVS) constitute a propeptide that is removed on maturation. Heme-binding residues include Glu321 and Cys457.

It belongs to the cytochrome P450 family. It depends on heme as a cofactor. In terms of tissue distribution, liver; kidney.

The protein localises to the endoplasmic reticulum membrane. Its subcellular location is the microsome membrane. It carries out the reaction an omega-methyl-long-chain fatty acid + reduced [NADPH--hemoprotein reductase] + O2 = an omega-hydroxy-long-chain fatty acid + oxidized [NADPH--hemoprotein reductase] + H2O + H(+). Cytochromes P450 are a group of heme-thiolate monooxygenases. In liver microsomes, this enzyme is involved in an NADPH-dependent electron transport pathway. It oxidizes a variety of structurally unrelated compounds, including steroids, fatty acids, and xenobiotics. In terms of biological role, the kidney P-450 system is rather specialized for the omega-hydroxylation of fatty acids. Both P450-KA1 and P450-KA2 catalyze the omega- and (omega-1)-hydroxylation of various fatty acids with no drug-metabolizing activity, and hydroxylate prostaglandin A1 and A2 solely at the omega-position. The polypeptide is Cytochrome P450 4A6 (CYP4A6) (Oryctolagus cuniculus (Rabbit)).